We begin with the raw amino-acid sequence, 82 residues long: MAADRAQNLQDTFLNHVRKTKTPLTIFLVNGVKLQGIVTWFDNFCLLLRRDGHSQLVYKHAISTIMPGAPIQLFEGGEDSPA.

The region spanning 11-71 is the Sm domain; the sequence is DTFLNHVRKT…ISTIMPGAPI (61 aa).

This sequence belongs to the Hfq family. Homohexamer.

RNA chaperone that binds small regulatory RNA (sRNAs) and mRNAs to facilitate mRNA translational regulation in response to envelope stress, environmental stress and changes in metabolite concentrations. Also binds with high specificity to tRNAs. This Rhodopseudomonas palustris (strain HaA2) protein is RNA-binding protein Hfq.